The primary structure comprises 306 residues: Protoheme IX farnesyltransferase (306 aa).

9 helical membrane passes run 32–52 (VVQLIVFCAFIGMVLAVPGMP), 57–77 (WALMAVASAGIWLVAGAAAAF), 108–128 (LLFSALLCAAGSALLYWWVNP), 129–149 (LTMWLTFATFVGYAVIYTVIL), 157–177 (IVIGGASGAMPPVLGWAAMTG), 183–203 (ALILFLIIFLWTPPHFWALAL), 230–250 (VFLYTLILFAGCLMPFVYGMS), 252–272 (WIYLAAAVVLSAGFCLYGFRL), and 285–305 (FRFSLIHLSLLFAALLVDHYL).

This sequence belongs to the UbiA prenyltransferase family. Protoheme IX farnesyltransferase subfamily.

It localises to the cell inner membrane. It carries out the reaction heme b + (2E,6E)-farnesyl diphosphate + H2O = Fe(II)-heme o + diphosphate. Its pathway is porphyrin-containing compound metabolism; heme O biosynthesis; heme O from protoheme: step 1/1. Converts heme B (protoheme IX) to heme O by substitution of the vinyl group on carbon 2 of heme B porphyrin ring with a hydroxyethyl farnesyl side group. This is Protoheme IX farnesyltransferase from Acidovorax ebreus (strain TPSY) (Diaphorobacter sp. (strain TPSY)).